We begin with the raw amino-acid sequence, 279 residues long: Protease HtpX homolog (279 aa).

Helical transmembrane passes span 6–26 (VFVLMAGLTGLVVAIGQALGG) and 29–49 (GAILALLLSAGMNLFMYWGSS). Histidine 130 contributes to the Zn(2+) binding site. The active site involves glutamate 131. Histidine 134 serves as a coordination point for Zn(2+). Transmembrane regions (helical) follow at residues 145–165 (IAATMAGAVSNLAQFAFFFGG) and 176–196 (VAGIAMLIIGPIVAMVIQFAI). Glutamate 201 contacts Zn(2+).

This sequence belongs to the peptidase M48B family. Zn(2+) serves as cofactor.

The protein resides in the cell inner membrane. The chain is Protease HtpX homolog from Gemmatimonas aurantiaca (strain DSM 14586 / JCM 11422 / NBRC 100505 / T-27).